The chain runs to 549 residues: Glucose-6-phosphate isomerase (549 aa).

The active-site Proton donor is glutamate 355. Active-site residues include histidine 386 and lysine 514.

Belongs to the GPI family.

It is found in the cytoplasm. The catalysed reaction is alpha-D-glucose 6-phosphate = beta-D-fructose 6-phosphate. Its pathway is carbohydrate biosynthesis; gluconeogenesis. It participates in carbohydrate degradation; glycolysis; D-glyceraldehyde 3-phosphate and glycerone phosphate from D-glucose: step 2/4. In terms of biological role, catalyzes the reversible isomerization of glucose-6-phosphate to fructose-6-phosphate. The polypeptide is Glucose-6-phosphate isomerase (Buchnera aphidicola subsp. Acyrthosiphon pisum (strain 5A)).